The primary structure comprises 146 residues: 3-hydroxyacyl-[acyl-carrier-protein] dehydratase FabZ (146 aa).

The active site involves His48.

The protein belongs to the thioester dehydratase family. FabZ subfamily.

The protein localises to the cytoplasm. The enzyme catalyses a (3R)-hydroxyacyl-[ACP] = a (2E)-enoyl-[ACP] + H2O. Its function is as follows. Involved in unsaturated fatty acids biosynthesis. Catalyzes the dehydration of short chain beta-hydroxyacyl-ACPs and long chain saturated and unsaturated beta-hydroxyacyl-ACPs. The polypeptide is 3-hydroxyacyl-[acyl-carrier-protein] dehydratase FabZ (Campylobacter lari (strain RM2100 / D67 / ATCC BAA-1060)).